A 155-amino-acid polypeptide reads, in one-letter code: 17.6 kDa class II heat shock protein (155 aa).

The sHSP domain maps to 38-155 (DAKAMAATPA…KPKTIQVQVA (118 aa)).

Belongs to the small heat shock protein (HSP20) family. May form oligomeric structures.

The protein localises to the cytoplasm. This is 17.6 kDa class II heat shock protein (HSP17.6) from Arabidopsis thaliana (Mouse-ear cress).